Reading from the N-terminus, the 110-residue chain is uncharacterized protein (110 aa).

The disordered stretch occupies residues serine 86–phenylalanine 110. The span at lysine 95 to proline 104 shows a compositional bias: basic residues.

This is an uncharacterized protein from Arabidopsis thaliana (Mouse-ear cress).